A 522-amino-acid chain; its full sequence is Stellatic acid synthase (522 aa).

The chain crosses the membrane as a helical span at residues 23–43 (IYGIYEPLLALFAVYSVAVVV). N-linked (GlcNAc...) asparagine glycans are attached at residues asparagine 267 and asparagine 451. Residue cysteine 464 coordinates heme. N-linked (GlcNAc...) asparagine glycosylation is present at asparagine 495.

The protein belongs to the cytochrome P450 family. The cofactor is heme.

The protein localises to the membrane. The catalysed reaction is stellata-2,6,19-triene + 3 reduced [NADPH--hemoprotein reductase] + 3 O2 = stellatate + 3 oxidized [NADPH--hemoprotein reductase] + 4 H2O + 4 H(+). It functions in the pathway secondary metabolite biosynthesis; terpenoid biosynthesis. Functionally, cytochrome P450 monooxygenase; part of the gene cluster that mediates the biosynthesis of the sesterterpene stellatic acid. The first step in the pathway is performed by the stellatatriene synthase that possesses both prenyl transferase and terpene cyclase activity, converting isopentenyl diphosphate and dimethylallyl diphosphate into geranylgeranyl diphosphate (GGDP) and then converting GGDP into stellata-2,6,19-triene. The cytochrome P450 monooxygenase Stl-P450 then catalyzes three successive oxidation reactions on the C-20 methyl group to generate the carboxylic acid of stellatic acid. The chain is Stellatic acid synthase from Emericella variicolor (Aspergillus stellatus).